The following is a 64-amino-acid chain: Large ribosomal subunit protein uL30 (64 aa).

The protein belongs to the universal ribosomal protein uL30 family. In terms of assembly, part of the 50S ribosomal subunit.

The chain is Large ribosomal subunit protein uL30 from Beijerinckia indica subsp. indica (strain ATCC 9039 / DSM 1715 / NCIMB 8712).